Reading from the N-terminus, the 898-residue chain is Protein translocase subunit SecA (898 aa).

ATP is bound by residues glutamine 87, 105 to 109, and aspartate 512; that span reads GEGKT. The segment covering 855-865 has biased composition (polar residues); it reads MQYQNNEGTSS. The segment at 855–898 is disordered; it reads MQYQNNEGTSSLHEKSEHKIGRNESCPCGSGKKYKHCHGSKAKY. The segment covering 866–876 has biased composition (basic and acidic residues); it reads LHEKSEHKIGR. Positions 880, 882, 891, and 892 each coordinate Zn(2+). The span at 886 to 898 shows a compositional bias: basic residues; the sequence is KKYKHCHGSKAKY.

The protein belongs to the SecA family. As to quaternary structure, monomer and homodimer. Part of the essential Sec protein translocation apparatus which comprises SecA, SecYEG and auxiliary proteins SecDF-YajC and YidC. The cofactor is Zn(2+).

It localises to the cell inner membrane. The protein localises to the cytoplasm. The enzyme catalyses ATP + H2O + cellular proteinSide 1 = ADP + phosphate + cellular proteinSide 2.. In terms of biological role, part of the Sec protein translocase complex. Interacts with the SecYEG preprotein conducting channel. Has a central role in coupling the hydrolysis of ATP to the transfer of proteins into and across the cell membrane, serving both as a receptor for the preprotein-SecB complex and as an ATP-driven molecular motor driving the stepwise translocation of polypeptide chains across the membrane. The protein is Protein translocase subunit SecA of Histophilus somni (strain 129Pt) (Haemophilus somnus).